The chain runs to 38 residues: Photosystem I reaction center subunit IX (38 aa).

Residues 6-26 (YLSTAPVVATLWLFLTAGILI) form a helical membrane-spanning segment.

It belongs to the PsaJ family.

The protein localises to the plastid. The protein resides in the chloroplast thylakoid membrane. Functionally, may help in the organization of the PsaE and PsaF subunits. The sequence is that of Photosystem I reaction center subunit IX from Cyanidioschyzon merolae (strain NIES-3377 / 10D) (Unicellular red alga).